Consider the following 86-residue polypeptide: Large ribosomal subunit protein bL31m (86 aa).

The N-terminal 18 residues, 1–18 (MKCSLRLFEKAGRLSVRS), are a transit peptide targeting the mitochondrion.

This sequence belongs to the bacterial ribosomal protein bL31 family. Highly divergent. Component of the mitochondrial large ribosomal subunit (mt-LSU). Mature yeast 74S mitochondrial ribosomes consist of a small (37S) and a large (54S) subunit. The 37S small subunit contains a 15S ribosomal RNA (15S mt-rRNA) and at least 32 different proteins. The 54S large subunit contains a 21S rRNA (21S mt-rRNA) and at least 45 different proteins.

Its subcellular location is the mitochondrion. In terms of biological role, component of the mitochondrial ribosome (mitoribosome), a dedicated translation machinery responsible for the synthesis of mitochondrial genome-encoded proteins, including at least some of the essential transmembrane subunits of the mitochondrial respiratory chain. The mitoribosomes are attached to the mitochondrial inner membrane and translation products are cotranslationally integrated into the membrane. This Schizosaccharomyces pombe (strain 972 / ATCC 24843) (Fission yeast) protein is Large ribosomal subunit protein bL31m (tam9).